Reading from the N-terminus, the 379-residue chain is Queuine tRNA-ribosyltransferase (379 aa).

The active-site Proton acceptor is the D96. Substrate contacts are provided by residues 96–100 (DSGGF), D150, Q196, and G223. An RNA binding region spans residues 254–260 (GIGTPDY). The Nucleophile role is filled by D273. Zn(2+) contacts are provided by C311, C313, C316, and H342.

This sequence belongs to the queuine tRNA-ribosyltransferase family. Homodimer. Within each dimer, one monomer is responsible for RNA recognition and catalysis, while the other monomer binds to the replacement base PreQ1. Requires Zn(2+) as cofactor.

The enzyme catalyses 7-aminomethyl-7-carbaguanine + guanosine(34) in tRNA = 7-aminomethyl-7-carbaguanosine(34) in tRNA + guanine. The protein operates within tRNA modification; tRNA-queuosine biosynthesis. Catalyzes the base-exchange of a guanine (G) residue with the queuine precursor 7-aminomethyl-7-deazaguanine (PreQ1) at position 34 (anticodon wobble position) in tRNAs with GU(N) anticodons (tRNA-Asp, -Asn, -His and -Tyr). Catalysis occurs through a double-displacement mechanism. The nucleophile active site attacks the C1' of nucleotide 34 to detach the guanine base from the RNA, forming a covalent enzyme-RNA intermediate. The proton acceptor active site deprotonates the incoming PreQ1, allowing a nucleophilic attack on the C1' of the ribose to form the product. After dissociation, two additional enzymatic reactions on the tRNA convert PreQ1 to queuine (Q), resulting in the hypermodified nucleoside queuosine (7-(((4,5-cis-dihydroxy-2-cyclopenten-1-yl)amino)methyl)-7-deazaguanosine). This is Queuine tRNA-ribosyltransferase from Treponema denticola (strain ATCC 35405 / DSM 14222 / CIP 103919 / JCM 8153 / KCTC 15104).